Here is a 481-residue protein sequence, read N- to C-terminus: Proline--tRNA ligase (481 aa).

Belongs to the class-II aminoacyl-tRNA synthetase family. ProS type 3 subfamily. Homodimer.

Its subcellular location is the cytoplasm. The enzyme catalyses tRNA(Pro) + L-proline + ATP = L-prolyl-tRNA(Pro) + AMP + diphosphate. Catalyzes the attachment of proline to tRNA(Pro) in a two-step reaction: proline is first activated by ATP to form Pro-AMP and then transferred to the acceptor end of tRNA(Pro). The protein is Proline--tRNA ligase of Pelodictyon phaeoclathratiforme (strain DSM 5477 / BU-1).